The sequence spans 75 residues: Penaeidin-3m (75 aa).

The N-terminal stretch at 1-19 (MRLVVCLVFLASFALVCQG) is a signal peptide. Glutamine 20 bears the Pyrrolidone carboxylic acid mark. 3 disulfides stabilise this stretch: cysteine 44-cysteine 59, cysteine 48-cysteine 66, and cysteine 60-cysteine 67. Serine 74 is subject to Serine amide.

This sequence belongs to the penaeidin family.

It localises to the cytoplasmic granule. Its function is as follows. Antibacterial and antifungal activity. Presents chitin-binding activity. The protein is Penaeidin-3m of Penaeus setiferus (Atlantic white shrimp).